A 504-amino-acid chain; its full sequence is MAAIGVHFGYTCACVAVFKDGRADVVANDAGDRVTPAVVAYRDTEQIVGIAAKQGRIRNAANTVVKVKQILGRRYDDPDAQAHKEESKCIVVNKSGLPRYEIDTGETTKYVSPEDVAKLIFHKMKETAQSALGSDVKDAVITVPFEFDEMQKNALRQAAESAGFNVLRLIHEPSAALLAYDIGQDSPLGKSHVLVYKLGGTSLSVTVLEVNSGVYRVLATQTDHQTGGESFTQELAQHLAAEFKKTFKQDVSGNARAMMKLMNSADVAKHTLSTLGSANCFVDSLYDGMDFECNVSRARFELICSSLFNKCIQPIKSLLEQVNLSTSDVNKVVLSGGSARIPKLQQMIRDLFPDVELLNSIPPDEVIPVGAAMQAGILVGKDSLALGEDSITVDCCASDITLKEVDDSGLEVFTVLFPSGTPLPARRQHTLQGPGSLSSVRLQLFQAQQPIAQIVLGDLEPKEELHDVVTVLTMKRDGSLHVTCTEQSSGRSEAITIETAAAAS.

It belongs to the heat shock protein 70 family. In terms of assembly, component of ribosome-associated complex (RAC).

The protein resides in the cytoplasm. The protein localises to the cytosol. Functionally, component of the ribosome-associated complex (RAC), a complex involved in folding or maintaining nascent polypeptides in a folding-competent state. The sequence is that of Heat shock 70 kDa protein 14 (hspa14) from Danio rerio (Zebrafish).